Consider the following 169-residue polypeptide: Peptide methionine sulfoxide reductase MsrA (169 aa).

Cysteine 13 is a catalytic residue.

The protein belongs to the MsrA Met sulfoxide reductase family.

The catalysed reaction is L-methionyl-[protein] + [thioredoxin]-disulfide + H2O = L-methionyl-(S)-S-oxide-[protein] + [thioredoxin]-dithiol. It catalyses the reaction [thioredoxin]-disulfide + L-methionine + H2O = L-methionine (S)-S-oxide + [thioredoxin]-dithiol. Functionally, has an important function as a repair enzyme for proteins that have been inactivated by oxidation. Catalyzes the reversible oxidation-reduction of methionine sulfoxide in proteins to methionine. This Mycolicibacterium gilvum (strain PYR-GCK) (Mycobacterium gilvum (strain PYR-GCK)) protein is Peptide methionine sulfoxide reductase MsrA.